The sequence spans 795 residues: Multiple C2 domain and transmembrane region protein 12 (795 aa).

C2 domains follow at residues 24-142, 180-298, and 341-463; these read RNPR…PQWY, VCAS…SAPA, and YSSD…TCSY. Positions 57, 109, and 113 each coordinate Ca(2+). Helical transmembrane passes span 590-610, 612-632, 730-750, and 752-772; these read CTPK…EYYI, WLVT…VILL, FVLI…CLGW, and LHVR…LPWF.

It belongs to the MCTP family. It depends on Ca(2+) as a cofactor. In terms of tissue distribution, expressed in root vascular tissues and meristems. Observed in flowers.

It localises to the endoplasmic reticulum membrane. In terms of biological role, may function as a signaling molecule by regulating the trafficking of other regulators. The polypeptide is Multiple C2 domain and transmembrane region protein 12 (Arabidopsis thaliana (Mouse-ear cress)).